The sequence spans 132 residues: Neurophysin 2 (132 aa).

Intrachain disulfides connect Cys10–Cys54, Cys13–Cys27, Cys21–Cys44, Cys28–Cys34, Cys61–Cys73, Cys67–Cys85, and Cys74–Cys79.

This sequence belongs to the vasopressin/oxytocin family.

It localises to the secreted. Its function is as follows. Neurophysin 2 specifically binds vasopressin. The polypeptide is Neurophysin 2 (Struthio camelus (Common ostrich)).